The sequence spans 683 residues: uncharacterized protein (683 aa).

2 stretches are compositionally biased toward polar residues: residues 407–420 (FETSTNKSSPTYTP) and 512–529 (EGSSPKPQTTAAKTSSEA). 3 disordered regions span residues 407-427 (FETSTNKSSPTYTPTPAKLST), 509-556 (FSRE…SSTV), and 621-648 (HNTSMPNPHHNSVKPEDHPHHPEGDHPD). A compositionally biased stretch (low complexity) spans 531–542 (LPPLLTTTPTPT). Polar residues-rich tracts occupy residues 543-556 (NTEKSQSTFASSTV) and 621-630 (HNTSMPNPHH). A compositionally biased stretch (basic and acidic residues) spans 633–648 (VKPEDHPHHPEGDHPD). A helical transmembrane segment spans residues 657 to 677 (IWLLPIAGTIFALVALVIVNI).

Its subcellular location is the host membrane. This is an uncharacterized protein from Alcelaphine herpesvirus 1 (strain C500) (AlHV-1).